Reading from the N-terminus, the 428-residue chain is Enolase (428 aa).

(2R)-2-phosphoglycerate is bound at residue Q167. Residue E209 is the Proton donor of the active site. Mg(2+)-binding residues include D246, E289, and D316. K341, R370, S371, and K392 together coordinate (2R)-2-phosphoglycerate. The active-site Proton acceptor is K341.

The protein belongs to the enolase family. As to quaternary structure, component of the RNA degradosome, a multiprotein complex involved in RNA processing and mRNA degradation. Requires Mg(2+) as cofactor.

The protein resides in the cytoplasm. The protein localises to the secreted. It localises to the cell surface. The enzyme catalyses (2R)-2-phosphoglycerate = phosphoenolpyruvate + H2O. Its pathway is carbohydrate degradation; glycolysis; pyruvate from D-glyceraldehyde 3-phosphate: step 4/5. Its function is as follows. Catalyzes the reversible conversion of 2-phosphoglycerate (2-PG) into phosphoenolpyruvate (PEP). It is essential for the degradation of carbohydrates via glycolysis. This is Enolase from Saccharophagus degradans (strain 2-40 / ATCC 43961 / DSM 17024).